The primary structure comprises 817 residues: Kinesin-like protein 2 (817 aa).

Residues 1 to 155 are disordered; it reads MEEEGHKSLT…YNDEKSVNAS (155 aa). Residues 8–23 are compositionally biased toward low complexity; sequence SLTSHLPQSSSSLSQS. Positions 39–60 are enriched in polar residues; the sequence is IKTNSSSSNILKPRLSLQNEVN. Low complexity predominate over residues 76 to 86; sequence SLASVKSSSLA. Polar residues predominate over residues 106–116; it reads PISSRSVSASS. Residues 122–132 are compositionally biased toward low complexity; that stretch reads ASAVSSSLNSS. Residues 155 to 242 adopt a coiled-coil conformation; sequence SALRTTEDRL…VSQKGMESLE (88 aa). Residues asparagine 473, arginine 475, arginine 479, glutamate 543, glycine 566, serine 567, glycine 568, lysine 569, threonine 570, and threonine 778 each contribute to the ATP site. Residues 473–807 form the Kinesin motor domain; it reads NIRVFCRVRP…LRFATKVNNT (335 aa).

The protein belongs to the TRAFAC class myosin-kinesin ATPase superfamily. Kinesin family. NCD subfamily.

Its subcellular location is the cytoplasm. The protein resides in the cytoskeleton. The protein localises to the spindle. It is found in the nucleus. It carries out the reaction ATP + H2O = ADP + phosphate + H(+). It catalyses the reaction ATP + H2O + a kinesin associated with a microtubule at position (n) = ADP + phosphate + a kinesin associated with a microtubule at position (n-1, toward the minus end).. Its function is as follows. Minus end-directed microtubule (MT) motor that is involved in spindle microtubule shortening, kinetochore capture, and polarization of cytoplasmic microtubules. During mitosis, promotes spindle microtubule shortening by depolymerization. During metaphase, involved in the recapture of kinetochores displaced from the spindle and their transport towards the spindle pole body; promotes transport both by microtubule end-on pulling and by lateral sliding along the side of the microtubule. During interphase, required for the polarization of cytoplasmic microtubules where it orients the microtubule plus ends toward the cell ends and the minus ends toward the cell center. Required for karyogamy. This chain is Kinesin-like protein 2, found in Schizosaccharomyces pombe (strain 972 / ATCC 24843) (Fission yeast).